Reading from the N-terminus, the 71-residue chain is Phosphatidylinositol N-acetylglucosaminyltransferase subunit Y (71 aa).

The Cytoplasmic portion of the chain corresponds to methionine 1 to leucine 3. The chain crosses the membrane as a helical span at residues serine 4–valine 26. The Lumenal segment spans residues glutamate 27–serine 44. The chain crosses the membrane as a helical span at residues leucine 45–isoleucine 65. The Cytoplasmic portion of the chain corresponds to lysine 66–asparagine 71.

As to quaternary structure, component of the glycosylphosphatidylinositol-N-acetylglucosaminyltransferase (GPI-GnT) complex composed at least by PIGA, PIGC, PIGH, PIGP, PIGQ, PIGY and DPM2. Interacts directly with PIGA; this interaction regulates glycosylphosphatidylinositol-N-acetylglucosaminyltransferase activity. Does not interact with Ras proteins.

It localises to the endoplasmic reticulum membrane. The protein operates within glycolipid biosynthesis; glycosylphosphatidylinositol-anchor biosynthesis. In terms of biological role, part of the glycosylphosphatidylinositol-N-acetylglucosaminyltransferase (GPI-GnT) complex that catalyzes the transfer of N-acetylglucosamine from UDP-N-acetylglucosamine to phosphatidylinositol and participates in the first step of GPI biosynthesis. May act by regulating the catalytic subunit PIGA. In Bos taurus (Bovine), this protein is Phosphatidylinositol N-acetylglucosaminyltransferase subunit Y.